Here is a 133-residue protein sequence, read N- to C-terminus: U-scoloptoxin(11)-Sm1a (133 aa).

Residues 1–19 (MIWFLAFILFLAAGELVSS) form the signal peptide.

It belongs to the scoloptoxin-11 family. Contains 10 disulfide bonds. In terms of tissue distribution, expressed by the venom gland.

The protein resides in the secreted. In Scolopendra morsitans (Tanzanian blue ringleg centipede), this protein is U-scoloptoxin(11)-Sm1a.